A 669-amino-acid polypeptide reads, in one-letter code: Protein fem-1 homolog A (669 aa).

7 ANK repeats span residues 2 to 31, 40 to 70, 82 to 111, 115 to 145, 149 to 178, 182 to 211, and 214 to 243; these read DLRTAVYNAARDGKLQLLQKLLSGRSREEL, GGGTPLLIAARYGHLDVVEYLVDRCGASVEA, EGAPPLWAASAAGHLDVVRSLLRRGASVNR, TNSTPLRAACFDGHLEVVRYLVGEHQADLEV, HGHTCLMISCYKGHREIARYLLEQGAQVNR, KGNTALHDCAESGSLEILQLLLGCKARMER, and YGMTPLLAASVTGHTNIVEYLIQEQPGQEQ. Ser108 is subject to Phosphoserine. The segment at 240-278 is disordered; it reads GQEQVAGGEAQPGLPQEDPSTSQGCAQPQGAPCCSSSPE. TPR repeat units lie at residues 298–332 and 390–423; these read VEALELLGATYVDKKRDLLGALKHWRRAMELRHQG and SYYIRYRGAVYADSGNFERCIRLWKYALDMQQSN. ANK repeat units lie at residues 534–576 and 580–609; these read NGFT…DPDS and DNNTPLHIAAQNNCPAIMNALIEAGAHMDA.

Belongs to the fem-1 family. Component of a CRL2 E3 ubiquitin-protein ligase complex, also named ECS (Elongin BC-CUL2/5-SOCS-box protein) complex, composed of CUL2, Elongin BC (ELOB and ELOC), RBX1 and substrate-specific adapter FEM1A. Interacts with PTGER4. Interacts with NFKB1; the interaction is direct. In terms of processing, phosphorylated; highly phosphorylated in myoblasts and myotubes. Phosphorylation at Ser-108 promotes PGE2-EP4-mediated inhibition of inflammation. Dephosphorylated by protein phosphatase 2A (PP2A). In terms of tissue distribution, present in macrophages derived from peripheral blood monocytes. Also present in atheromata (at protein level).

It is found in the mitochondrion. It localises to the cytoplasm. Its pathway is protein modification; protein ubiquitination. In terms of biological role, substrate-recognition component of a Cul2-RING (CRL2) E3 ubiquitin-protein ligase complex of the DesCEND (destruction via C-end degrons) pathway, which recognizes a C-degron located at the extreme C terminus of target proteins, leading to their ubiquitination and degradation. The C-degron recognized by the DesCEND pathway is usually a motif of less than ten residues and can be present in full-length proteins, truncated proteins or proteolytically cleaved forms. The CRL2(FEM1A) complex specifically recognizes proteins with an arginine at the C-terminus: recognizes and binds proteins ending with -Lys/Arg-Xaa-Arg and -Lys/Arg-Xaa-Xaa-Arg C-degrons, such as SIL1 or OR51B2, leading to their ubiquitination and degradation. Promotes ubiquitination and degradation of SLBP. Involved in PGE2-EP4-mediated inhibition of inflammation of macrophages via interaction with NFKB1 and PTGER4. Promotes inflammation in brain microglia through MAP2K4/MKK4-mediated signaling. The protein is Protein fem-1 homolog A of Homo sapiens (Human).